Consider the following 750-residue polypeptide: Retron Eco8 OLD nuclease (750 aa).

The ATPase domain N-terminus stretch occupies residues 1–173; it reads MTIESIRVKN…IDLYDWNPIW (173 aa). Position 33-37 (33-37) interacts with ATP; sequence NVGKS. A dimerization domain region spans residues 174–260; that stretch reads KLISNLNSFN…TQSDGTNSNK (87 aa). The tract at residues 261-390 is ATPase domain C-terminus; sequence FLETLLHLLI…FSDNEARLFF (130 aa). Residues 391 to 704 form a toprim domain region; that stretch reads SEYIVFVEGA…SGWVTTFLNY (314 aa). E398, E402, D450, D452, S623, and E641 together coordinate a divalent metal cation.

This sequence belongs to the class 1 OLD nuclease family. As to quaternary structure, homodimer. It depends on a divalent metal cation as a cofactor.

In terms of biological role, probable nuclease member of antiviral defense system retron Eco8, composed of an reverse transcriptase (RT), this nuclease and a non-coding RNA (ncRNA) encoded between them. Expression of retron Eco8 confers protection against bacteriophages T4, T6, T7 and SECphi4, SECphi6 and SECphi18. At multiplicity of infection (MOI) of 0.02 cultures slow growth when infected with SECphi4 but do not collapse, at MOI 2 cultures collapse. When the retron is cloned in another E.coli strain synthesizes msDNA (a branched RNA linked by a 2',5'-phosphodiester bond to a single-stranded DNA). The retron transcript serves as primer and template to the reaction, and codes for the RT. This is Retron Eco8 OLD nuclease from Escherichia coli.